The sequence spans 478 residues: Ribosomal RNA small subunit methyltransferase F (478 aa).

S-adenosyl-L-methionine-binding positions include 123-129 (AAAPGSK), E147, D174, and D192. Residue C245 is the Nucleophile of the active site.

This sequence belongs to the class I-like SAM-binding methyltransferase superfamily. RsmB/NOP family.

The protein resides in the cytoplasm. The enzyme catalyses cytidine(1407) in 16S rRNA + S-adenosyl-L-methionine = 5-methylcytidine(1407) in 16S rRNA + S-adenosyl-L-homocysteine + H(+). Specifically methylates the cytosine at position 1407 (m5C1407) of 16S rRNA. In Vibrio campbellii (strain ATCC BAA-1116), this protein is Ribosomal RNA small subunit methyltransferase F.